The following is a 667-amino-acid chain: Probable endo-1,3(4)-beta-glucanase AFLA_105200 (667 aa).

Positions 1–24 (MSSSSFVWTVGSIALSSLITPTIA) are cleaved as a signal peptide. The 264-residue stretch at 25-288 (DGSGSRYQLT…WAGGVFGDSG (264 aa)) folds into the GH16 domain. Asn63 carries N-linked (GlcNAc...) asparagine glycosylation. Glu144 acts as the Nucleophile in catalysis. Glu149 serves as the catalytic Proton donor. Polar residues-rich tracts occupy residues 354–363 (VPSVTSTPIL) and 379–394 (ATSS…QTSV). 2 disordered regions span residues 354 to 427 (VPSV…ADAV) and 448 to 646 (GTIQ…AGAS). Composition is skewed to low complexity over residues 395 to 427 (AGAE…ADAV), 448 to 483 (GTIQ…SQEP), and 574 to 622 (APTS…EATA). Positions 623–637 (PTETDSGASTGTNPE) are enriched in polar residues. The GPI-anchor amidated glycine moiety is linked to residue Gly644. The propeptide at 645-667 (ASKSVGISGLAGIVCGIAMAMLA) is removed in mature form.

The protein belongs to the glycosyl hydrolase 16 family.

The protein localises to the cell membrane. The catalysed reaction is Endohydrolysis of (1-&gt;3)- or (1-&gt;4)-linkages in beta-D-glucans when the glucose residue whose reducing group is involved in the linkage to be hydrolyzed is itself substituted at C-3.. Mixed-linked glucanase involved in the degradation of complex natural cellulosic substrates. The protein is Probable endo-1,3(4)-beta-glucanase AFLA_105200 of Aspergillus flavus (strain ATCC 200026 / FGSC A1120 / IAM 13836 / NRRL 3357 / JCM 12722 / SRRC 167).